Reading from the N-terminus, the 95-residue chain is Large ribosomal subunit protein uL23cz/uL23cy (95 aa).

It belongs to the universal ribosomal protein uL23 family. Part of the 50S ribosomal subunit.

It is found in the plastid. It localises to the chloroplast. Its function is as follows. Binds to 23S rRNA. In Amborella trichopoda, this protein is Large ribosomal subunit protein uL23cz/uL23cy (rpl23-A).